Reading from the N-terminus, the 362-residue chain is Prostaglandin F2-alpha receptor (362 aa).

The Extracellular segment spans residues 1–31 (MSTNNSVQPVSPASELLSNTTCQLEEDLSIS). N-linked (GlcNAc...) asparagine glycosylation is found at asparagine 4 and asparagine 19. The chain crosses the membrane as a helical span at residues 32–54 (FSIIFMTVGILSNSLAIAILMKA). Residues 55–69 (YQRFRQKYKSSFLLL) lie on the Cytoplasmic side of the membrane. The chain crosses the membrane as a helical span at residues 70–90 (ASALVITDFFGHLINGTIAVF). The Extracellular segment spans residues 91–109 (VYASDKDWIYFDKSNILCS). Cysteines 108 and 186 form a disulfide. A helical transmembrane segment spans residues 110–131 (IFGICMVFSGLCPLFLGSLMAI). The Cytoplasmic segment spans residues 132-152 (ERCIGVTKPIFHSTKITTKHV). Residues 153–175 (KMMLSGVCFFAVFVALLPILGHR) traverse the membrane as a helical segment. Residues 176-198 (DYKIQASRTWCFYKTDQIKDWED) are Extracellular-facing. The chain crosses the membrane as a helical span at residues 199–224 (RFYLLLFAFLGLLALGISFVCNAITG). Topologically, residues 225–250 (ISLLKVKFRSQQHRQGRSHHFEMVIQ) are cytoplasmic. The helical transmembrane segment at 251 to 267 (LLGIMCVSCICWSPFLV) threads the bilayer. The Extracellular portion of the chain corresponds to 268–285 (TMASIGMNIQDFKDSCER). A helical membrane pass occupies residues 286-307 (TLFTLRMATWNQILDPWVYILL). Residues 308 to 362 (RKAVLRNLYVCTRRCCGVHVISLHVWELSSIKNSLKVAAISDLPVTEKVTQQTST) lie on the Cytoplasmic side of the membrane.

Belongs to the G-protein coupled receptor 1 family.

The protein resides in the cell membrane. Functionally, receptor for prostaglandin F2-alpha (PGF2-alpha). The activity of this receptor is mediated by G proteins which activate a phosphatidylinositol-calcium second messenger system. Initiates luteolysis in the corpus luteum. This Ovis aries (Sheep) protein is Prostaglandin F2-alpha receptor (PTGFR).